A 185-amino-acid polypeptide reads, in one-letter code: Guanylate kinase (185 aa).

One can recognise a Guanylate kinase-like domain in the interval 4–181 (GALYVVSGPS…ACNDLISIIE (178 aa)). 11–18 (GPSGAGKS) contacts ATP.

It belongs to the guanylate kinase family.

It localises to the cytoplasm. It catalyses the reaction GMP + ATP = GDP + ADP. Its function is as follows. Essential for recycling GMP and indirectly, cGMP. This chain is Guanylate kinase, found in Fusobacterium nucleatum subsp. nucleatum (strain ATCC 25586 / DSM 15643 / BCRC 10681 / CIP 101130 / JCM 8532 / KCTC 2640 / LMG 13131 / VPI 4355).